Consider the following 185-residue polypeptide: Ribosome maturation factor RimP (185 aa).

The protein belongs to the RimP family.

Its subcellular location is the cytoplasm. Required for maturation of 30S ribosomal subunits. The chain is Ribosome maturation factor RimP from Magnetococcus marinus (strain ATCC BAA-1437 / JCM 17883 / MC-1).